Consider the following 205-residue polypeptide: Holliday junction branch migration complex subunit RuvA (205 aa).

Residues 1–64 (MIGRLRGIIL…EDAQLLFGFI (64 aa)) form a domain I region. The interval 65–143 (HKQERVLFRE…GLSGDLFVPQ (79 aa)) is domain II. Residues 144-156 (GAGEIPAAIDAPA) form a flexible linker region. A domain III region spans residues 157-205 (MPADPEGEAVAALVALGYKPQEASRMVSKVASAGSDCEMLIRDALRAAL).

It belongs to the RuvA family. Homotetramer. Forms an RuvA(8)-RuvB(12)-Holliday junction (HJ) complex. HJ DNA is sandwiched between 2 RuvA tetramers; dsDNA enters through RuvA and exits via RuvB. An RuvB hexamer assembles on each DNA strand where it exits the tetramer. Each RuvB hexamer is contacted by two RuvA subunits (via domain III) on 2 adjacent RuvB subunits; this complex drives branch migration. In the full resolvosome a probable DNA-RuvA(4)-RuvB(12)-RuvC(2) complex forms which resolves the HJ.

Its subcellular location is the cytoplasm. In terms of biological role, the RuvA-RuvB-RuvC complex processes Holliday junction (HJ) DNA during genetic recombination and DNA repair, while the RuvA-RuvB complex plays an important role in the rescue of blocked DNA replication forks via replication fork reversal (RFR). RuvA specifically binds to HJ cruciform DNA, conferring on it an open structure. The RuvB hexamer acts as an ATP-dependent pump, pulling dsDNA into and through the RuvAB complex. HJ branch migration allows RuvC to scan DNA until it finds its consensus sequence, where it cleaves and resolves the cruciform DNA. The polypeptide is Holliday junction branch migration complex subunit RuvA (Sodalis glossinidius (strain morsitans)).